We begin with the raw amino-acid sequence, 523 residues long: Mogroside I-A1 synthase (523 aa).

His39 (proton acceptor) is an active-site residue. Asp136 functions as the Charge relay in the catalytic mechanism. The UDP-alpha-D-glucose site is built by Ser311, Gln374, Trp392, Asn393, Ser394, Glu397, Asp413, and Gln414.

This sequence belongs to the UDP-glycosyltransferase family. As to expression, highly expressed in young fruits 15 and 34 days after anthesis (15-DAA and 34-DAA).

It carries out the reaction mogrol + UDP-alpha-D-glucose = mogroside I-A1 + UDP + H(+). The catalysed reaction is mogroside I-A1 + UDP-alpha-D-glucose = mogroside IIE + UDP + H(+). It catalyses the reaction mogroside IE + UDP-alpha-D-glucose = mogroside IIE + UDP + H(+). The enzyme catalyses mogroside II-A1 + UDP-alpha-D-glucose = mogroside IIIX + UDP + H(+). It carries out the reaction mogroside II-A + UDP-alpha-D-glucose = mogroside III + UDP + H(+). The catalysed reaction is mogroside IIE + UDP-alpha-D-glucose = mogroside III-C3(1-&gt;6) + UDP + H(+). It catalyses the reaction mogroside III + UDP-alpha-D-glucose = isomogroside IV + UDP + H(+). The enzyme catalyses mogroside III + UDP-alpha-D-glucose = mogroside IV + UDP + H(+). It carries out the reaction mogroside IIIX + UDP-alpha-D-glucose = mogroside IVA + UDP + H(+). The catalysed reaction is siamenoside I + UDP-alpha-D-glucose = isomogroside V + UDP + H(+). It functions in the pathway secondary metabolite biosynthesis; terpenoid biosynthesis. UDP-glycosyltransferase involved in the biosynthesis of cucurbitacin and mogroside tetracyclic triterpene natural products (e.g. siamenoside I and mogrosides IV, V and VI). Cucurbitacins have cytotoxic properties and exhibit deterrent taste as a defense barrier against herbivores. Mogrosides are nonsugar highly oxygenated compounds used as high-intensity zero-calorie sweeteners; they also possess pharmacological properties such as regulating immunity, lowering blood sugar and lipid levels, protecting the liver, and acting as antioxidants and antitumor agents. Catalyzes the C24 primary glucosylation of mogrol and mogroside I-E1, and the C3 primary glucosylation of mogroside I-A1, mogroside II-A1 and mogroside II-A. Also supports branching glucosylations of mogroside II-E, mogroside III, mogroside IIIx and siamenoside I. This Siraitia grosvenorii (Monk's fruit) protein is Mogroside I-A1 synthase.